The following is a 172-amino-acid chain: Glutamyl-tRNA(Gln) amidotransferase subunit C-4, mitochondrial (172 aa).

The transit peptide at Met1 to Phe23 directs the protein to the mitochondrion. Positions Pro51 to Pro73 are disordered.

Belongs to the GatC family. In terms of assembly, subunit of the heterotrimeric GatCAB amidotransferase (AdT) complex, composed of A, B and C subunits.

It localises to the mitochondrion. It catalyses the reaction L-glutamyl-tRNA(Gln) + L-glutamine + ATP + H2O = L-glutaminyl-tRNA(Gln) + L-glutamate + ADP + phosphate + H(+). Functionally, allows the formation of correctly charged Gln-tRNA(Gln) through the transamidation of misacylated Glu-tRNA(Gln) in the mitochondria. The reaction takes place in the presence of glutamine and ATP through an activated gamma-phospho-Glu-tRNA(Gln). The sequence is that of Glutamyl-tRNA(Gln) amidotransferase subunit C-4, mitochondrial from Culex quinquefasciatus (Southern house mosquito).